The chain runs to 95 residues: Aspartyl/glutamyl-tRNA(Asn/Gln) amidotransferase subunit C (95 aa).

Belongs to the GatC family. In terms of assembly, heterotrimer of A, B and C subunits.

It carries out the reaction L-glutamyl-tRNA(Gln) + L-glutamine + ATP + H2O = L-glutaminyl-tRNA(Gln) + L-glutamate + ADP + phosphate + H(+). The enzyme catalyses L-aspartyl-tRNA(Asn) + L-glutamine + ATP + H2O = L-asparaginyl-tRNA(Asn) + L-glutamate + ADP + phosphate + 2 H(+). Functionally, allows the formation of correctly charged Asn-tRNA(Asn) or Gln-tRNA(Gln) through the transamidation of misacylated Asp-tRNA(Asn) or Glu-tRNA(Gln) in organisms which lack either or both of asparaginyl-tRNA or glutaminyl-tRNA synthetases. The reaction takes place in the presence of glutamine and ATP through an activated phospho-Asp-tRNA(Asn) or phospho-Glu-tRNA(Gln). The polypeptide is Aspartyl/glutamyl-tRNA(Asn/Gln) amidotransferase subunit C (Magnetococcus marinus (strain ATCC BAA-1437 / JCM 17883 / MC-1)).